Reading from the N-terminus, the 463-residue chain is Pentatricopeptide repeat-containing protein At2g17670 (463 aa).

The interval 1–63 is disordered; the sequence is MGKVPSSFRS…PSLRNPFKSP (63 aa). PPR repeat units lie at residues 121 to 157, 158 to 192, 193 to 223, 229 to 263, 264 to 298, 299 to 333, 334 to 368, 369 to 403, and 404 to 438; these read GRST…GLEP, DQVT…HSPP, DTYT…MRDD, DLVS…GFKP, DCFL…GVEP, DQIT…GYEP, DTAT…GCAP, NDCT…GVKL, and ESNG…KSLS.

The protein belongs to the PPR family. P subfamily.

The sequence is that of Pentatricopeptide repeat-containing protein At2g17670 from Arabidopsis thaliana (Mouse-ear cress).